The following is a 278-amino-acid chain: MSTMYAASREALTQTRAALSSALGSVSAGAATAAAAQIGAELFSVVEILDEQRTLRSALSDTSTTGSVREGLAERVFGSKVSAETLAVVKSAAGQDWSVTSDLLNSLVLLGRESLLKAAADQGQLDAVEDELFRLGRIVAGDPKLEQSLSDRSVPAKGKRDLLSKLLYGKVTAVSEALATQAVGRLKNSAPADAFDELSNLAAAQRKAVVAKVRSAAPLSSEQSDRLTATLTRTYGKPVTVHVEVDPELLSGLVVRVGDEVIDGSGAGRLAALRKSLK.

It belongs to the ATPase delta chain family. As to quaternary structure, F-type ATPases have 2 components, F(1) - the catalytic core - and F(0) - the membrane proton channel. F(1) has five subunits: alpha(3), beta(3), gamma(1), delta(1), epsilon(1). F(0) has three main subunits: a(1), b(2) and c(10-14). The alpha and beta chains form an alternating ring which encloses part of the gamma chain. F(1) is attached to F(0) by a central stalk formed by the gamma and epsilon chains, while a peripheral stalk is formed by the delta and b chains.

The protein localises to the cell membrane. Its function is as follows. F(1)F(0) ATP synthase produces ATP from ADP in the presence of a proton or sodium gradient. F-type ATPases consist of two structural domains, F(1) containing the extramembraneous catalytic core and F(0) containing the membrane proton channel, linked together by a central stalk and a peripheral stalk. During catalysis, ATP synthesis in the catalytic domain of F(1) is coupled via a rotary mechanism of the central stalk subunits to proton translocation. Functionally, this protein is part of the stalk that links CF(0) to CF(1). It either transmits conformational changes from CF(0) to CF(1) or is implicated in proton conduction. The polypeptide is ATP synthase subunit delta (Rhodococcus opacus (strain B4)).